A 432-amino-acid polypeptide reads, in one-letter code: Enolase (432 aa).

Q163 provides a ligand contact to (2R)-2-phosphoglycerate. The active-site Proton donor is the E205. The Mg(2+) site is built by D242, E285, and D312. The (2R)-2-phosphoglycerate site is built by K337, R366, S367, and K388. K337 serves as the catalytic Proton acceptor.

Belongs to the enolase family. Mg(2+) serves as cofactor.

It localises to the cytoplasm. It is found in the secreted. The protein localises to the cell surface. It catalyses the reaction (2R)-2-phosphoglycerate = phosphoenolpyruvate + H2O. It participates in carbohydrate degradation; glycolysis; pyruvate from D-glyceraldehyde 3-phosphate: step 4/5. Functionally, catalyzes the reversible conversion of 2-phosphoglycerate (2-PG) into phosphoenolpyruvate (PEP). It is essential for the degradation of carbohydrates via glycolysis. The polypeptide is Enolase (Bifidobacterium longum subsp. infantis (strain ATCC 15697 / DSM 20088 / JCM 1222 / NCTC 11817 / S12)).